The sequence spans 361 residues: Phosphoserine aminotransferase (361 aa).

Arg43 contributes to the L-glutamate binding site. Pyridoxal 5'-phosphate-binding positions include 77-78 (AS), Trp103, Thr153, Asp172, and Gln195. Lys196 bears the N6-(pyridoxal phosphate)lysine mark. Residue 237 to 238 (NT) coordinates pyridoxal 5'-phosphate.

Belongs to the class-V pyridoxal-phosphate-dependent aminotransferase family. SerC subfamily. In terms of assembly, homodimer. Requires pyridoxal 5'-phosphate as cofactor.

It is found in the cytoplasm. The catalysed reaction is O-phospho-L-serine + 2-oxoglutarate = 3-phosphooxypyruvate + L-glutamate. The enzyme catalyses 4-(phosphooxy)-L-threonine + 2-oxoglutarate = (R)-3-hydroxy-2-oxo-4-phosphooxybutanoate + L-glutamate. It functions in the pathway amino-acid biosynthesis; L-serine biosynthesis; L-serine from 3-phospho-D-glycerate: step 2/3. Its pathway is cofactor biosynthesis; pyridoxine 5'-phosphate biosynthesis; pyridoxine 5'-phosphate from D-erythrose 4-phosphate: step 3/5. Catalyzes the reversible conversion of 3-phosphohydroxypyruvate to phosphoserine and of 3-hydroxy-2-oxo-4-phosphonooxybutanoate to phosphohydroxythreonine. This chain is Phosphoserine aminotransferase, found in Desulfotalea psychrophila (strain LSv54 / DSM 12343).